The chain runs to 436 residues: Histidinol dehydrogenase (436 aa).

3 residues coordinate NAD(+): Tyr135, Gln196, and Asn219. Substrate-binding residues include Ser242, Gln264, and His267. Zn(2+)-binding residues include Gln264 and His267. Catalysis depends on proton acceptor residues Glu332 and His333. 4 residues coordinate substrate: His333, Asp366, Glu420, and His425. Asp366 is a binding site for Zn(2+). Residue His425 coordinates Zn(2+).

Belongs to the histidinol dehydrogenase family. The cofactor is Zn(2+).

It carries out the reaction L-histidinol + 2 NAD(+) + H2O = L-histidine + 2 NADH + 3 H(+). It functions in the pathway amino-acid biosynthesis; L-histidine biosynthesis; L-histidine from 5-phospho-alpha-D-ribose 1-diphosphate: step 9/9. Its function is as follows. Catalyzes the sequential NAD-dependent oxidations of L-histidinol to L-histidinaldehyde and then to L-histidine. In Methylococcus capsulatus (strain ATCC 33009 / NCIMB 11132 / Bath), this protein is Histidinol dehydrogenase.